We begin with the raw amino-acid sequence, 157 residues long: Protein Smg homolog (157 aa).

It belongs to the Smg family.

The chain is Protein Smg homolog from Xanthomonas campestris pv. campestris (strain 8004).